The chain runs to 475 residues: FAD-dependent monooxygenase sdgC (475 aa).

A signal peptide spans 1–23 (MDKRSFKVIVVGGSIAGLTLAHS). Residues Glu-35, Gly-49, and Arg-126 each contribute to the FAD site. The N-linked (GlcNAc...) asparagine glycan is linked to Asn-236. Ala-330 is a binding site for FAD. Residues 446-466 (ISGVLLLVIPIIALVYGYSVI) traverse the membrane as a helical segment.

It belongs to the paxM FAD-dependent monooxygenase family. FAD serves as cofactor.

It is found in the membrane. Its pathway is secondary metabolite biosynthesis. FAD-dependent monooxygenase; part of the gene cluster that mediates the biosynthesis of the polyenes aspernidgulenes. The carbon backbone of aspernidgulenes is synthesized by the HR-PKS sdgA, which accepts acetyl-CoA as the starter unit and performs malonyl-CoA extensions as well as regioselective methylation and reduction. The resulting nonaketide offloads the HR-PKS by intramolecular lactonization to yield the 5,6-dihydro-alpha-pyrone-containing hexaenoic acids preaspernidgulene A1 and A2. The FAD-dependent monooxygenase sdgC then installs the first epoxide on the penultimate double bond. Subsequently, the FAD-dependent monooxygenase sdgF presumably generates a ketone intermediate through Meinwald rearrangement involving a hydride shift. Next, sdgC introduces another epoxide on the last olefin of the ketone intermediate after E/Z isomerization. The epoxide hydrolase sdgD then catalyzes stereospecific cyclization of the 5,6-dihydro-alpha-pyrone and opening of the epoxide ring to form an oxygenated trimethylcyclopentanone and an oxabicyclo[2.2.1]heptane unit. Finally, the bicyclic unit undergoes hydrolytic cleavage, either spontaneously or catalyzed by sdgD, to assemble the dimethyl-gamma-lactone moiety in aspernidgulene A1. This is FAD-dependent monooxygenase sdgC from Emericella nidulans (strain FGSC A4 / ATCC 38163 / CBS 112.46 / NRRL 194 / M139) (Aspergillus nidulans).